The following is a 133-amino-acid chain: Small ribosomal subunit protein uS8 (133 aa).

This sequence belongs to the universal ribosomal protein uS8 family. Part of the 30S ribosomal subunit.

In terms of biological role, one of the primary rRNA binding proteins, it binds directly to 16S rRNA central domain where it helps coordinate assembly of the platform of the 30S subunit. This Saccharolobus islandicus (strain L.S.2.15 / Lassen #1) (Sulfolobus islandicus) protein is Small ribosomal subunit protein uS8.